The chain runs to 1026 residues: Maternal effect protein staufen (1026 aa).

Residues Ala-16–Leu-29 show a composition bias toward basic residues. Disordered stretches follow at residues Ala-16–Pro-159, Asn-190–Ala-210, and Thr-234–Thr-311. The span at Ala-70–Asn-111 shows a compositional bias: low complexity. Residues Gln-112 to Ser-126 show a composition bias toward polar residues. 2 stretches are compositionally biased toward low complexity: residues Tyr-192–Ala-210 and Thr-234–Val-256. The span at Thr-267 to Val-284 shows a compositional bias: basic and acidic residues. A compositionally biased stretch (polar residues) spans Ser-285–Ser-303. DRBM domains lie at Thr-311–Tyr-378 and Pro-490–Thr-557. Phosphoserine occurs at positions 563 and 570. In terms of domain architecture, DRBM 3 spans Ser-578–Lys-645. His-606, Lys-608, Lys-628, Lys-629, and Lys-632 together coordinate RNA. The segment at Pro-647 to Asp-707 is disordered. Phosphothreonine is present on residues Thr-650 and Thr-655. A Phosphoserine modification is found at Ser-676. Residues Val-678–Gly-688 show a composition bias toward polar residues. In terms of domain architecture, DRBM 4 spans Asn-711–Ala-781. The tract at residues Glu-855–Ala-948 is disordered. Low complexity predominate over residues Glu-864–Ser-890. Polar residues predominate over residues Gln-891–Leu-901. 2 stretches are compositionally biased toward low complexity: residues Asn-902–Gly-920 and Asn-934–Ser-947. A DRBM 5 domain is found at His-951 to Lys-1018.

As to quaternary structure, component of neuronal ribonucleoprotein complexes (RNPs) that contains at least various translational repressor and mRNA turnover proteins such as me31B, tral, Upf1, AGO2 and sometimes Fmr1. As to expression, polar granules at the posterior pole of the oocyte, and by the time the egg is laid, at the anterior pole.

The protein resides in the cytoplasm. It is found in the cytoplasmic ribonucleoprotein granule. Functionally, RNA-binding protein which forms ribonucleoprotein complexes (RNPs) that play critical roles in the localization, translational repression and turnover of RNAs during embryogenesis, neurotransmission and neurogenesis. In the oocyte, essential for the localization of both the osk/oskar mRNA to the posterior pole and bcd/bicoid RNA to the anterior pole, and is therefore required for the correct anterior-posterior patterning of the developing embryo. Association with osk or bcd at their respective poles, appears to promote the formation and stabilization of the ribonucleoprotein complexes. Integral component of diverse neuritic ribonucleoprotein complexes (RNPs) that mediate the transport, translation and turnover of neuronal RNAs during neuorgenesis and the translation repression of synaptic transcripts in preparation for their dendritic targeting. This Drosophila melanogaster (Fruit fly) protein is Maternal effect protein staufen (stau).